A 222-amino-acid chain; its full sequence is GTP-binding nuclear protein Ran-4 (222 aa).

In terms of domain architecture, Small GTPase Ran-type spans 10–174; it reads DLPTFKLLIV…LYLARRIAGD (165 aa). 21–28 provides a ligand contact to GTP; the sequence is DGGTGKTT. The interval 40–48 is switch-I; the sequence is HNTEPTLGV. Residues Gly71, 125–128, and 153–155 contribute to the GTP site; these read NKVD and SAK. A switch-II region spans residues 71 to 87; it reads GQEKYSGLKDAYYIHGQ.

The protein belongs to the small GTPase superfamily. Ran family. As to quaternary structure, found in a nuclear export complex with RanGTP, exportin and pre-miRNA.

The protein resides in the nucleus. GTP-binding protein involved in nucleocytoplasmic transport. Required for the import of protein into the nucleus and also for RNA export. Involved in chromatin condensation and control of cell cycle. The polypeptide is GTP-binding nuclear protein Ran-4 (RAN4) (Arabidopsis thaliana (Mouse-ear cress)).